A 377-amino-acid chain; its full sequence is MKFELDTTQGRARRGRLIFDRGTVETPAFMPVGTYGTVKGMTPEEVRATGADILLGNTFHLWLRPGEEIMRKHGDLHDFMNWQRPILTDSGGFQVFSLGDIRKITEEGVHFRSPINGEKIFLDPEKSMQIQDSLGSDVVMIFDECTPYPATEDEARKSMQMSLRWAQRSRDEFDRLENPNALFGIIQGGVYEDLRDESLTGLVNIGFDGYAIGGLAVGEPKPDMHRILEHVCPQIPADKPRYLMGVGKPEDLVEGVRRGVDMFDCVMPTRNARNGHLFTSEGVIKIRNARHRDDTAPLDEKCDCYTCKNYSRAYLYHLDRCNEILGARLNTIHNLRYYQMLMEGLRGAIETGTLDAFVSDFYTGLGREVPEVPELVD.

Aspartate 89 acts as the Proton acceptor in catalysis. Residues 89–93 (DSGGF), aspartate 143, glutamine 187, and glycine 214 each bind substrate. Residues 245 to 251 (GVGKPED) are RNA binding. Aspartate 264 serves as the catalytic Nucleophile. An RNA binding; important for wobble base 34 recognition region spans residues 269–273 (TRNAR). Zn(2+)-binding residues include cysteine 302, cysteine 304, cysteine 307, and histidine 333.

It belongs to the queuine tRNA-ribosyltransferase family. In terms of assembly, homodimer. Within each dimer, one monomer is responsible for RNA recognition and catalysis, while the other monomer binds to the replacement base PreQ1. Zn(2+) serves as cofactor.

The catalysed reaction is 7-aminomethyl-7-carbaguanine + guanosine(34) in tRNA = 7-aminomethyl-7-carbaguanosine(34) in tRNA + guanine. It participates in tRNA modification; tRNA-queuosine biosynthesis. Catalyzes the base-exchange of a guanine (G) residue with the queuine precursor 7-aminomethyl-7-deazaguanine (PreQ1) at position 34 (anticodon wobble position) in tRNAs with GU(N) anticodons (tRNA-Asp, -Asn, -His and -Tyr). Catalysis occurs through a double-displacement mechanism. The nucleophile active site attacks the C1' of nucleotide 34 to detach the guanine base from the RNA, forming a covalent enzyme-RNA intermediate. The proton acceptor active site deprotonates the incoming PreQ1, allowing a nucleophilic attack on the C1' of the ribose to form the product. After dissociation, two additional enzymatic reactions on the tRNA convert PreQ1 to queuine (Q), resulting in the hypermodified nucleoside queuosine (7-(((4,5-cis-dihydroxy-2-cyclopenten-1-yl)amino)methyl)-7-deazaguanosine). This is Queuine tRNA-ribosyltransferase from Shewanella denitrificans (strain OS217 / ATCC BAA-1090 / DSM 15013).